Here is a 320-residue protein sequence, read N- to C-terminus: MNDRVKVAIIGPGNIGTDLMIKIMRNGRHLKMGAMVGVDPNSEGLARAARMDVATTAEGIDGLLRLDVFKEIDIVFDATSAGAHGRHNELLQAHGVQVIDLTPAAIGPYVIPSINLEEENATNMNMVTCGGQATIPIVAAVSRIAKVHYAEIVASISSRSAGPGTRANIDEFTETTRAAIEKLGGAERGKAIIVLNPAEPPLIMRDTVFVLSENAEPAAIEASIAEMVSSVQEYVPGYRLKQSVQFDAVPPDMPLNVPGIGPRHGLKTSVFLEVEGAAHYLPSYAGNLDIMTSAALACGDMMARRRMAAGIARGFKETAR.

C129 functions as the Acyl-thioester intermediate in the catalytic mechanism. NAD(+) is bound by residues 160–168 and N287; that span reads SAGPGTRAN.

This sequence belongs to the acetaldehyde dehydrogenase family.

It carries out the reaction acetaldehyde + NAD(+) + CoA = acetyl-CoA + NADH + H(+). The polypeptide is Acetaldehyde dehydrogenase 2 (Burkholderia cenocepacia (strain ATCC BAA-245 / DSM 16553 / LMG 16656 / NCTC 13227 / J2315 / CF5610) (Burkholderia cepacia (strain J2315))).